A 268-amino-acid chain; its full sequence is GTP cyclohydrolase III (268 aa).

It belongs to the archaeal-type GTP cyclohydrolase family. In terms of assembly, homotrimer. Mg(2+) serves as cofactor.

The catalysed reaction is GTP + 3 H2O = 2-amino-5-formylamino-6-(5-phospho-D-ribosylamino)pyrimidin-4(3H)-one + 2 phosphate + 2 H(+). Catalyzes the formation of 2-amino-5-formylamino-6-ribofuranosylamino-4(3H)-pyrimidinone ribonucleotide monophosphate and inorganic phosphate from GTP. Also has an independent pyrophosphate phosphohydrolase activity. The polypeptide is GTP cyclohydrolase III (gch3) (Methanocaldococcus jannaschii (strain ATCC 43067 / DSM 2661 / JAL-1 / JCM 10045 / NBRC 100440) (Methanococcus jannaschii)).